The following is a 153-amino-acid chain: Guanyl-specific ribonuclease N1 (153 aa).

The N-terminal stretch at 1 to 20 (MVQLLSAFVSLLSVVAVSGA) is a signal peptide. The propeptide occupies 21-49 (AIPAPAPEAVVDVAPETATIEPTGNFTAQ). 2 disulfides stabilise this stretch: Cys-51-Cys-59 and Cys-55-Cys-152. His-89 is an active-site residue. Glu-107 serves as the catalytic Proton acceptor. The Proton donor role is filled by His-141.

Belongs to the ribonuclease N1/T1 family.

It catalyses the reaction [RNA] containing guanosine + H2O = an [RNA fragment]-3'-guanosine-3'-phosphate + a 5'-hydroxy-ribonucleotide-3'-[RNA fragment].. The protein is Guanyl-specific ribonuclease N1 (grn) of Neurospora crassa (strain ATCC 24698 / 74-OR23-1A / CBS 708.71 / DSM 1257 / FGSC 987).